Consider the following 872-residue polypeptide: Alanine--tRNA ligase (872 aa).

Residues His567, His571, Cys669, and His673 each contribute to the Zn(2+) site.

This sequence belongs to the class-II aminoacyl-tRNA synthetase family. Zn(2+) is required as a cofactor.

The protein resides in the cytoplasm. It catalyses the reaction tRNA(Ala) + L-alanine + ATP = L-alanyl-tRNA(Ala) + AMP + diphosphate. In terms of biological role, catalyzes the attachment of alanine to tRNA(Ala) in a two-step reaction: alanine is first activated by ATP to form Ala-AMP and then transferred to the acceptor end of tRNA(Ala). Also edits incorrectly charged Ser-tRNA(Ala) and Gly-tRNA(Ala) via its editing domain. This chain is Alanine--tRNA ligase, found in Streptococcus pyogenes serotype M3 (strain ATCC BAA-595 / MGAS315).